A 401-amino-acid polypeptide reads, in one-letter code: Imidazolonepropionase (401 aa).

Residues His66 and His68 each contribute to the Fe(3+) site. Residues His66 and His68 each coordinate Zn(2+). 4-imidazolone-5-propanoate is bound by residues Arg75, Tyr138, and His171. Residue Tyr138 participates in N-formimidoyl-L-glutamate binding. His236 lines the Fe(3+) pocket. His236 lines the Zn(2+) pocket. Gln239 is a 4-imidazolone-5-propanoate binding site. Fe(3+) is bound at residue Asp311. Position 311 (Asp311) interacts with Zn(2+). Positions 313 and 315 each coordinate N-formimidoyl-L-glutamate. Thr316 serves as a coordination point for 4-imidazolone-5-propanoate.

Belongs to the metallo-dependent hydrolases superfamily. HutI family. It depends on Zn(2+) as a cofactor. The cofactor is Fe(3+).

It is found in the cytoplasm. The catalysed reaction is 4-imidazolone-5-propanoate + H2O = N-formimidoyl-L-glutamate. The protein operates within amino-acid degradation; L-histidine degradation into L-glutamate; N-formimidoyl-L-glutamate from L-histidine: step 3/3. Catalyzes the hydrolytic cleavage of the carbon-nitrogen bond in imidazolone-5-propanoate to yield N-formimidoyl-L-glutamate. It is the third step in the universal histidine degradation pathway. This Acinetobacter baumannii (strain ATCC 17978 / DSM 105126 / CIP 53.77 / LMG 1025 / NCDC KC755 / 5377) protein is Imidazolonepropionase.